A 605-amino-acid chain; its full sequence is Aspartate--tRNA(Asp/Asn) ligase (605 aa).

Glu178 contacts L-aspartate. The interval 202–205 (QLFK) is aspartate. L-aspartate is bound at residue Arg224. ATP contacts are provided by residues 224-226 (RDE) and Gln233. L-aspartate is bound at residue His458. Residue Glu488 participates in ATP binding. Arg495 provides a ligand contact to L-aspartate. Residue 540 to 543 (GLDR) participates in ATP binding. A disordered region spans residues 580–605 (QQLKELHVTPAKPAKTTAKTKPRPAD).

This sequence belongs to the class-II aminoacyl-tRNA synthetase family. Type 1 subfamily. In terms of assembly, homodimer.

It is found in the cytoplasm. The catalysed reaction is tRNA(Asx) + L-aspartate + ATP = L-aspartyl-tRNA(Asx) + AMP + diphosphate. Aspartyl-tRNA synthetase with relaxed tRNA specificity since it is able to aspartylate not only its cognate tRNA(Asp) but also tRNA(Asn). Reaction proceeds in two steps: L-aspartate is first activated by ATP to form Asp-AMP and then transferred to the acceptor end of tRNA(Asp/Asn). The sequence is that of Aspartate--tRNA(Asp/Asn) ligase from Thermosynechococcus vestitus (strain NIES-2133 / IAM M-273 / BP-1).